A 137-amino-acid chain; its full sequence is Small ribosomal subunit protein uS12 (137 aa).

Disordered stretches follow at residues methionine 1–proline 22 and lysine 37–lysine 57. Residues arginine 9–serine 19 show a composition bias toward basic residues. 3-methylthioaspartic acid is present on aspartate 102.

It belongs to the universal ribosomal protein uS12 family. As to quaternary structure, part of the 30S ribosomal subunit. Contacts proteins S8 and S17. May interact with IF1 in the 30S initiation complex.

In terms of biological role, with S4 and S5 plays an important role in translational accuracy. Functionally, interacts with and stabilizes bases of the 16S rRNA that are involved in tRNA selection in the A site and with the mRNA backbone. Located at the interface of the 30S and 50S subunits, it traverses the body of the 30S subunit contacting proteins on the other side and probably holding the rRNA structure together. The combined cluster of proteins S8, S12 and S17 appears to hold together the shoulder and platform of the 30S subunit. The protein is Small ribosomal subunit protein uS12 of Limosilactobacillus fermentum (strain NBRC 3956 / LMG 18251) (Lactobacillus fermentum).